The primary structure comprises 273 residues: Aquaporin NIP1-4 (273 aa).

2 helical membrane passes run 59-79 (LLAEFLATFFLMFAGLGAITV) and 86-106 (VTFPGVAVAWGAAVMAMVYAV). Positions 115-117 (NPA) match the NPA 1 motif. A run of 3 helical transmembrane segments spans residues 133 to 155 (APAYALAQTAAATAASVVLRLMF), 174 to 194 (SLVIEFVITFYLMFVIMAVAT), and 198 to 218 (AVGHMAGVAVGGTIMLNVLFA). The NPA 2 signature appears at 227-229 (NPA). A helical membrane pass occupies residues 245 to 265 (WVYILGPFAGAAAGAWAYSLI).

It belongs to the MIP/aquaporin (TC 1.A.8) family. NIP (TC 1.A.8.12) subfamily. As to expression, expressed in leaves.

The protein resides in the membrane. Its function is as follows. Aquaporins facilitate the transport of water and small neutral solutes across cell membranes. In Oryza sativa subsp. japonica (Rice), this protein is Aquaporin NIP1-4 (NIP1-4).